A 309-amino-acid polypeptide reads, in one-letter code: CDK-activating kinase assembly factor MAT1 (309 aa).

An RING-type zinc finger spans residues 6-50; sequence CPRCKTTKYRNPSLKLMVNVCGHTLCESCVELLFVRGSGSCQECD. A UIM domain is found at 142 to 161; that stretch reads REQEELEEALEMEKHENEQR.

As to quaternary structure, associates with CDK7 and cyclin H.

The protein resides in the nucleus. Stabilizes the cyclin H-CDK7 complex to form a functional CDK-activating kinase (CAK) enzymatic complex. The protein is CDK-activating kinase assembly factor MAT1 (mnat1) of Xenopus laevis (African clawed frog).